Here is a 360-residue protein sequence, read N- to C-terminus: Archaemetzincin-2 (360 aa).

Histidine 254 contacts Zn(2+). The active-site Proton acceptor is the glutamate 255. Residues histidine 258, histidine 264, cysteine 265, cysteine 270, cysteine 289, and cysteine 292 each contribute to the Zn(2+) site.

The protein belongs to the peptidase M54 family. Zn(2+) serves as cofactor. Down-regulated in testis from patients with maturation arrest (MA) or Sertoli cell-only syndrome (SCOS).

In terms of biological role, probable zinc metalloprotease. The protein is Archaemetzincin-2 (AMZ2) of Homo sapiens (Human).